The primary structure comprises 1032 residues: Toll-like receptor 9 (1032 aa).

Positions 1 to 25 (MVLRRRTLHPLSLLVQAAVLAETLA) are cleaved as a signal peptide. The Extracellular segment spans residues 26–818 (LGTLPAFLPC…LCLDEVLSWD (793 aa)). Residues Cys35 and Cys45 are joined by a disulfide bond. Position 47–51 (47–51 (WLFLK)) interacts with DNA. 26 LRR repeats span residues 62–85 (CSNI…DFVH), 87–110 (SNLR…HFSC), 122–147 (MRTL…SLVN), 150–166 (LSHT…LAGL), 167–190 (YSLR…AVKV), 198–221 (LSNL…LPPS), 223–242 (EYLL…DLAN), 243–268 (LTSL…CIEC), 283–306 (LSHL…WFQG), 308–332 (VNLS…AFQN), 333–356 (LTRL…RLHL), 363–386 (LVSL…TLRW), 390–413 (LPKL…IFGT), 415–440 (RALR…TPEE), 471–495 (CKNF…MFVN), 497–520 (SRLQ…QFLP), 521–544 (LTNL…SFSE), 546–573 (PQLQ…SFVT), 575–599 (LSML…LNSN), 601–623 (VRFL…LYLH), 628–651 (LSGL…NLDN), 653–676 (PKSL…SLSF), 677–700 (LPNL…TLPN), 702–724 (TLLQ…FFAL), 725–748 (AVEL…WFGP), and 750–773 (VMNL…AFVD). Asn64 carries an N-linked (GlcNAc...) asparagine glycan. DNA-binding positions include 72-77 (SNRIHH) and 95-109 (KWNC…LHFS). Residues Cys98 and Cys110 are joined by a disulfide bond. An N-linked (GlcNAc...) asparagine glycan is attached at Asn129. Position 132 (Tyr132) interacts with DNA. The N-linked (GlcNAc...) asparagine glycan is linked to Asn147. A disulfide bond links Cys178 and Cys184. 179 to 181 (YYK) contributes to the DNA binding site. N-linked (GlcNAc...) asparagine glycosylation is present at Asn200. Tyr208 provides a ligand contact to DNA. N-linked (GlcNAc...) asparagine glycans are attached at residues Asn210 and Asn242. 2 disulfides stabilise this stretch: Cys255-Cys268 and Cys258-Cys265. 2 S-palmitoyl cysteine lipidation sites follow: Cys258 and Cys265. 4 N-linked (GlcNAc...) asparagine glycosylation sites follow: Asn300, Asn309, Asn332, and Asn340. A disordered region spans residues 430–462 (PSTLSEATPEEADDAEQEELLSADPHPAPLSTP). The segment covering 437 to 450 (TPEEADDAEQEELL) has biased composition (acidic residues). Cys471 and Cys501 form a disulfide bridge. N-linked (GlcNAc...) asparagine glycans are attached at residues Asn495 and Asn514. A glycan (N-linked (GlcNAc...) asparagine) is linked at Asn568. 3 N-linked (GlcNAc...) asparagine glycosylation sites follow: Asn670, Asn695, and Asn700. 2 N-linked (GlcNAc...) asparagine glycosylation sites follow: Asn732 and Asn752. 2 disulfide bridges follow: Cys765-Cys791 and Cys767-Cys810. A helical membrane pass occupies residues 819-839 (CFGLSLLAVAVGMVVPILHHL). Residues 840–1032 (CGWDVWYCFH…QNFCRGPTAE (193 aa)) lie on the Cytoplasmic side of the membrane. The TIR domain maps to 868-1013 (LPYDAFVVFD…GFWAQLSTAL (146 aa)).

The protein belongs to the Toll-like receptor family. In terms of assembly, monomer and homodimer. Exists as a monomer in the absence of unmethylated cytidine-phosphate-guanosine (CpG) ligand. Proteolytic processing of an insertion loop (Z-loop) is required for homodimerization upon binding to the unmethylated CpG ligand leading to its activation. Interacts with MYD88 via their respective TIR domains. Interacts with BTK. Interacts (via transmembrane domain) with UNC93B1. Interacts with CD300LH; the interaction may promote full activation of TLR9-triggered innate responses. Interacts with CNPY3 and HSP90B1; this interaction is required for proper folding in the endoplasmic reticulum. Interacts with SMPDL3B. Interacts with CD82; this interaction is essential for TLR9-dependent myddosome formation in response to CpG stimulation. Post-translationally, activated by proteolytic cleavage of the flexible loop between repeats LRR14 and LRR15 within the ectodomain. Cleavage requires UNC93B1. Proteolytically processed by first removing the majority of the ectodomain by either asparagine endopeptidase (AEP) or a cathepsin followed by a trimming event that is solely cathepsin mediated and required for optimal receptor signaling. Palmitoylated by ZDHHC3 in the Golgi regulates TLR9 trafficking from the Golgi to endosomes. Depalmitoylation by PPT1 controls the release of TLR9 from UNC93B1 in endosomes. In terms of tissue distribution, expressed in the basolateral region of gastric epithelial cells with high levels detected in antrum and body mucosa (at protein level). Detected in spleen and stomach at higher levels in C57BL/6 mice than BALB/C.

The protein resides in the endoplasmic reticulum membrane. Its subcellular location is the endosome. It is found in the lysosome. It localises to the cytoplasmic vesicle. The protein localises to the phagosome. In terms of biological role, key component of innate and adaptive immunity. TLRs (Toll-like receptors) control host immune response against pathogens through recognition of molecular patterns specific to microorganisms. TLR9 is a nucleotide-sensing TLR which is activated by unmethylated cytidine-phosphate-guanosine (CpG) dinucleotides. Acts via MYD88 and TRAF6, leading to NF-kappa-B activation, cytokine secretion and the inflammatory response. Plays a role in defense against systemic mouse cytomegalovirus infection. Controls lymphocyte response to Helicobacter infection. Upon CpG stimulation, induces B-cell proliferation, activation, survival and antibody production. The polypeptide is Toll-like receptor 9 (Tlr9) (Mus musculus (Mouse)).